The chain runs to 542 residues: CTP synthase (542 aa).

The amidoligase domain stretch occupies residues 1–265 (MARYVFITGG…DSEVLCAFGI (265 aa)). Ser-13 contributes to the CTP binding site. Ser-13 contributes to the UTP binding site. An ATP-binding site is contributed by 14–19 (SLGKGI). Tyr-54 provides a ligand contact to L-glutamine. Asp-71 contacts ATP. The Mg(2+) site is built by Asp-71 and Glu-139. Residues 146-148 (DIE), 186-191 (KTKPTQ), and Lys-222 contribute to the CTP site. Residues 186–191 (KTKPTQ) and Lys-222 each bind UTP. Positions 291–541 (TIAVVGKYTG…IEAAVEQSRL (251 aa)) constitute a Glutamine amidotransferase type-1 domain. Ala-353 is a binding site for L-glutamine. The Nucleophile; for glutamine hydrolysis role is filled by Cys-380. Residues 381–384 (FGMQ), Glu-404, and Arg-469 each bind L-glutamine. Active-site residues include His-514 and Glu-516.

The protein belongs to the CTP synthase family. In terms of assembly, homotetramer.

It catalyses the reaction UTP + L-glutamine + ATP + H2O = CTP + L-glutamate + ADP + phosphate + 2 H(+). The catalysed reaction is L-glutamine + H2O = L-glutamate + NH4(+). It carries out the reaction UTP + NH4(+) + ATP = CTP + ADP + phosphate + 2 H(+). Its pathway is pyrimidine metabolism; CTP biosynthesis via de novo pathway; CTP from UDP: step 2/2. Its activity is regulated as follows. Allosterically activated by GTP, when glutamine is the substrate; GTP has no effect on the reaction when ammonia is the substrate. The allosteric effector GTP functions by stabilizing the protein conformation that binds the tetrahedral intermediate(s) formed during glutamine hydrolysis. Inhibited by the product CTP, via allosteric rather than competitive inhibition. Its function is as follows. Catalyzes the ATP-dependent amination of UTP to CTP with either L-glutamine or ammonia as the source of nitrogen. Regulates intracellular CTP levels through interactions with the four ribonucleotide triphosphates. The sequence is that of CTP synthase from Bartonella tribocorum (strain CIP 105476 / IBS 506).